Here is a 146-residue protein sequence, read N- to C-terminus: Mu-like prophage FluMu G protein 1 (146 aa).

It to phage Mu protein G.

This chain is Mu-like prophage FluMu G protein 1, found in Haemophilus influenzae (strain ATCC 51907 / DSM 11121 / KW20 / Rd).